A 411-amino-acid chain; its full sequence is Protein phosphatase 1 regulatory subunit 36 (411 aa).

In terms of assembly, interacts with PPP1CA.

Its function is as follows. Inhibits phosphatase activity of protein phosphatase 1 (PP1) complexes. The polypeptide is Protein phosphatase 1 regulatory subunit 36 (Ppp1r36) (Rattus norvegicus (Rat)).